The sequence spans 147 residues: Hemoglobin subunit gamma (147 aa).

Positions 3 to 147 constitute a Globin domain; that stretch reads HFTAEEKAAI…VANALAYKYH (145 aa). 2 residues coordinate heme b: His-64 and His-93.

The protein belongs to the globin family. Heterotetramer of two alpha chains and two gamma chains in fetal hemoglobin (Hb F). Red blood cells.

Gamma chains make up the fetal hemoglobin F, in combination with alpha chains. This Loxodonta africana (African elephant) protein is Hemoglobin subunit gamma (HBG).